Here is a 247-residue protein sequence, read N- to C-terminus: 1-(5-phosphoribosyl)-5-[(5-phosphoribosylamino)methylideneamino] imidazole-4-carboxamide isomerase (247 aa).

Aspartate 8 functions as the Proton acceptor in the catalytic mechanism. Aspartate 131 (proton donor) is an active-site residue.

It belongs to the HisA/HisF family.

The protein resides in the cytoplasm. It carries out the reaction 1-(5-phospho-beta-D-ribosyl)-5-[(5-phospho-beta-D-ribosylamino)methylideneamino]imidazole-4-carboxamide = 5-[(5-phospho-1-deoxy-D-ribulos-1-ylimino)methylamino]-1-(5-phospho-beta-D-ribosyl)imidazole-4-carboxamide. It participates in amino-acid biosynthesis; L-histidine biosynthesis; L-histidine from 5-phospho-alpha-D-ribose 1-diphosphate: step 4/9. This is 1-(5-phosphoribosyl)-5-[(5-phosphoribosylamino)methylideneamino] imidazole-4-carboxamide isomerase from Ralstonia pickettii (strain 12J).